The sequence spans 163 residues: Protein VASCULATURE COMPLEXITY AND CONNECTIVITY (163 aa).

The first 27 residues, 1 to 27, serve as a signal peptide directing secretion; the sequence is MTKIGGILVCLVIVGLDVAAAILGIQA. The next 3 membrane-spanning stretches (helical) occupy residues 54-74, 95-115, and 133-153; these read LGLGAAAILVMAHVLLNLVGG, MACLVLTWIVFAVGFGSIVIG, and FLSIGGILCFLHALFCVAYYV.

Belongs to the DESIGUAL family. As to quaternary structure, interacts with OPS. Expressed in vascular cells, mostly in hypocotyls, and, to a lower extent, in seedlings, roots, flowers, siliques, developing leaves and inflorescences, but barely in mature leaves and seeds. High levels in leaf primordia.

The protein resides in the endoplasmic reticulum membrane. Functionally, required, together with OPS, for embryo provasculature development and cotyledon vascular complexity and connectivity. Necessary, partially redundantly with DEAL2 and DEAL3, to ensure bilateral symmetry development and early leaf margin patterning, probably via the regulation of auxin and CUC2 distribution. Regulates cell proliferation but not cell expansion. The polypeptide is Protein VASCULATURE COMPLEXITY AND CONNECTIVITY (Arabidopsis thaliana (Mouse-ear cress)).